The primary structure comprises 2335 residues: Histone-lysine N-methyltransferase ATXR3 (2335 aa).

Disordered regions lie at residues 30–142 (NESK…FKDE), 332–355 (STGNRLKRHGAEPDSIERKHSYAD), 371–556 (CSRS…SSSK), and 902–961 (DQVP…KTDT). Polar residues-rich tracts occupy residues 31–46 (ESKTAATTENGHTSIA) and 53–62 (QPANKPSASS). A compositionally biased stretch (basic residues) spans 65-84 (VKKKRIVKVIRKVVKRRPKQ). The Nuclear localization signal 1 signature appears at 67–74 (KKRIVKVI). The segment covering 97-112 (PPSQVVQLPAESQLQI) has biased composition (polar residues). Composition is skewed to basic and acidic residues over residues 340–353 (HGAEPDSIERKHSY), 371–390 (CSRSLHSDHYSQHSAERLYR), and 430–452 (WSPHDRSRYHENRDRSPYARERS). Residues 461-475 (HARKRSPRDRRHHDY) are compositionally biased toward basic residues. 3 stretches are compositionally biased toward basic and acidic residues: residues 485-498 (SPHDRSRPSDRRDY), 507-548 (QSDR…ESNG), and 910-921 (PRAKVRSKERCP). The Nuclear localization signal 2 motif lies at 527–534 (ERRDCQTG). The span at 922 to 932 (SRPARPSPASS) shows a compositional bias: low complexity. A compositionally biased stretch (polar residues) spans 941 to 961 (SHSQSTASTGQDSQGLWKTDT). Residues 1382-1389 (ARRSSAIL) carry the Nuclear localization signal 3 motif. A disordered region spans residues 1532–1572 (NRKSFSSESDTSSELSDNGKSDNYSSASASESESDIRSEGR). Over residues 1535–1547 (SFSSESDTSSELS) the composition is skewed to low complexity. Positions 1765–1904 (KEIESRSDDK…YGEEITFDYN (140 aa)) constitute an SET domain. Position 1868 (Cys1868) interacts with Zn(2+). Residue Tyr1903 coordinates S-adenosyl-L-methionine. One can recognise a Post-SET domain in the interval 1914–1930 (EASVCLCGSQVCRGSYL). Zn(2+) contacts are provided by Cys1918, Cys1920, and Cys1925.

The protein belongs to the class V-like SAM-binding methyltransferase superfamily. Histone-lysine methyltransferase family. TRX/MLL subfamily. In terms of tissue distribution, expressed in roots, leaves, stems and inflorescences.

It localises to the nucleus. It carries out the reaction L-lysyl(4)-[histone H3] + 3 S-adenosyl-L-methionine = N(6),N(6),N(6)-trimethyl-L-lysyl(4)-[histone H3] + 3 S-adenosyl-L-homocysteine + 3 H(+). Functionally, histone methyltransferase specifically required for trimethylation of 'Lys-4' of histone H3 (H3K4me3) and is crucial for both sporophyte and gametophyte development. Function as a diurnal 'writer' to counteract the nocturne 'eraser' demethylase activity of JMJ14 thus orchestrating the circadian rhythm of histone modifications (e.g. H3K4me3) and modulating the rhythmic expression of diurnal target genes; this mechanism relies also on the circadian clock oscillators CCA1 and LHY. This chain is Histone-lysine N-methyltransferase ATXR3, found in Arabidopsis thaliana (Mouse-ear cress).